A 382-amino-acid chain; its full sequence is ATP phosphoribosyltransferase regulatory subunit (382 aa).

The protein belongs to the class-II aminoacyl-tRNA synthetase family. HisZ subfamily. As to quaternary structure, heteromultimer composed of HisG and HisZ subunits.

The protein resides in the cytoplasm. It participates in amino-acid biosynthesis; L-histidine biosynthesis; L-histidine from 5-phospho-alpha-D-ribose 1-diphosphate: step 1/9. Its function is as follows. Required for the first step of histidine biosynthesis. May allow the feedback regulation of ATP phosphoribosyltransferase activity by histidine. This Lacticaseibacillus casei (strain BL23) (Lactobacillus casei) protein is ATP phosphoribosyltransferase regulatory subunit.